Reading from the N-terminus, the 94-residue chain is Large ribosomal subunit protein bL25 (94 aa).

The tract at residues 1-20 (MFKFNAEVRQSQGKGASRRL) is disordered.

It belongs to the bacterial ribosomal protein bL25 family. As to quaternary structure, part of the 50S ribosomal subunit; part of the 5S rRNA/L5/L18/L25 subcomplex. Contacts the 5S rRNA. Binds to the 5S rRNA independently of L5 and L18.

Its function is as follows. This is one of the proteins that binds to the 5S RNA in the ribosome where it forms part of the central protuberance. The chain is Large ribosomal subunit protein bL25 from Pasteurella multocida (strain Pm70).